The chain runs to 1587 residues: Sister chromatid cohesion protein mis4 (1587 aa).

The interval 140 to 172 (PKEKPDASSINTNRSSSDNGFLTPSSSPRSPSC) is disordered. Over residues 147 to 162 (SSINTNRSSSDNGFLT) the composition is skewed to polar residues. Residues 163 to 172 (PSSSPRSPSC) show a composition bias toward low complexity. S183 bears the Phosphoserine mark. HEAT repeat units follow at residues 775-812 (LNLK…IPSI), 814-851 (RTHP…AYRE), 853-888 (IPQI…ATED), 890-927 (NIRV…SPAS), 1101-1140 (ATLM…ARHS), and 1183-1220 (DAYV…RETS).

The protein belongs to the SCC2/Nipped-B family. As to quaternary structure, interacts with ssl3.

The protein resides in the nucleus. It is found in the chromosome. In terms of biological role, plays a structural role in chromatin. Chromatid cohesion molecule required for equal sister chromatid separation in anaphase. May form a stable link between chromatids in S phase that is split rather than removed in anaphase. Also required for spindle-kinetochore interaction in early mitosis and inhibit sister chromatid separation until the cleavage of Rad21 in anaphase. In Schizosaccharomyces pombe (strain 972 / ATCC 24843) (Fission yeast), this protein is Sister chromatid cohesion protein mis4 (mis4).